The chain runs to 226 residues: Ras-related protein Rab-32 (226 aa).

A2 is subject to N-acetylalanine. The GTP site is built by V38, G39, K40, T41, S42, S53, Q54, Y56, and T59. T41 contributes to the Mg(2+) binding site. Residues 50 to 64 carry the Switch 1 motif; sequence QLFSQHYRATIGVDF. T59 serves as a coordination point for Mg(2+). S73 carries the post-translational modification Phosphoserine. Residue D83 participates in Mg(2+) binding. GTP-binding residues include G86, N145, K146, D148, A177, and K178. The Switch 2 signature appears at 86–99; the sequence is GQERFGNMTRVYYK. Residues 180–199 are PKA-RII subunit binding domain; it reads NINIDEAARFLVENILANHQ. Residues 202–226 are disordered; sequence PSEENDGRIKLDEETMKKENKSHCC. The segment covering 206–226 has biased composition (basic and acidic residues); sequence NDGRIKLDEETMKKENKSHCC. 2 S-geranylgeranyl cysteine lipidation sites follow: C225 and C226.

The protein belongs to the small GTPase superfamily. Rab family. In terms of assembly, interacts with ANKRD27. A decreased interaction with ANKRD27 seen in the presence of SGSM2. Interacts with LRRK2 (via N-terminus); this interaction results in stimulation of RAB10 phosphorylation by LRRK2. Mg(2+) serves as cofactor.

Its subcellular location is the mitochondrion. It localises to the mitochondrion outer membrane. The protein localises to the cytoplasmic vesicle. It is found in the phagosome. The protein resides in the phagosome membrane. Its subcellular location is the melanosome. It localises to the melanosome membrane. The enzyme catalyses GTP + H2O = GDP + phosphate + H(+). With respect to regulation, regulated by guanine the nucleotide exchange factor (GEF) BLOC-3 complex composed of HPS1 and HPS4 which promote the exchange of bound GDP for free GTP. Regulated by the GTPase activating protein (GAP) SGSM2/RUTBC1 which increases the GTP hydrolysis activity. Inhibited by GDP dissociation inhibitors (GDIs) which prevent Rab-GDP dissociation. The small GTPases Rab are key regulators of intracellular membrane trafficking, from the formation of transport vesicles to their fusion with membranes. Rabs cycle between an inactive GDP-bound form and an active GTP-bound form that is able to recruit to membranes different set of downstream effectors directly responsible for vesicle formation, movement, tethering and fusion. Also acts as an A-kinase anchoring protein by binding to the type II regulatory subunit of protein kinase A and anchoring it to the mitochondrion. Also involved in synchronization of mitochondrial fission. Plays a role in the maturation of phagosomes that engulf pathogens, such as S.aureus and M.tuberculosis. Plays an important role in the control of melanin production and melanosome biogenesis. In concert with RAB38, regulates the proper trafficking of melanogenic enzymes TYR, TYRP1 and DCT/TYRP2 to melanosomes in melanocytes. Stimulates phosphorylation of RAB10 'Thr-73' by LRRK2. The sequence is that of Ras-related protein Rab-32 (RAB32) from Sus scrofa (Pig).